A 561-amino-acid chain; its full sequence is Mercuric reductase (561 aa).

The HMA domain maps to 1 to 65; that stretch reads MTTLKITGMT…AVAGLGYEAT (65 aa). Residues Cys-11 and Cys-14 each coordinate a metal cation. Residues Ala-110, Gly-130, and Thr-135 each coordinate FAD. An intrachain disulfide couples Cys-136 to Cys-141. Lys-145, Ala-211, Asp-403, and Val-411 together coordinate FAD. Positions 558 and 559 each coordinate Hg(2+).

The protein belongs to the class-I pyridine nucleotide-disulfide oxidoreductase family. In terms of assembly, homodimer. FAD serves as cofactor.

The enzyme catalyses Hg + NADP(+) + H(+) = Hg(2+) + NADPH. Resistance to Hg(2+) in bacteria appears to be governed by a specialized system which includes mercuric reductase. MerA protein is responsible for volatilizing mercury as Hg(0). This is Mercuric reductase (merA) from Acinetobacter calcoaceticus.